The following is a 128-amino-acid chain: uncharacterized protein (128 aa).

2 disordered regions span residues 1 to 53 (MHLP…PKGR) and 85 to 105 (PDGPLTRRYAPTSGKPSSGPL).

This is an uncharacterized protein from Escherichia coli.